A 536-amino-acid polypeptide reads, in one-letter code: Vacuolar segregation protein pep7 (536 aa).

The segment at 1–31 is disordered; that stretch reads MQNGKRRIGVRISSNLSNHSGTNLSTSAQSD. A compositionally biased stretch (polar residues) spans 12–31; the sequence is ISSNLSNHSGTNLSTSAQSD. The C2H2-type zinc-finger motif lies at 39-62; it reads TECPICGLELPNLSALNDHLDVTH. The FYVE-type 1; degenerate zinc finger occupies 136-201; sequence PDMVCHDPMC…VCRECYEGRP (66 aa). Zn(2+) is bound by residues C158, C161, C193, C196, C281, C284, C297, C300, C305, C308, C324, and C327. An FYVE-type 2 zinc finger spans residues 275–332; that stretch reads DSVVQICPECNNSFTLTRRRRHCRLCGRVICRFCVLEISLPQHPQPLLICMSCNQNYF.

Functionally, required for vacuole segregation and vacuole protein sorting. Possibly part of a complex which tethers the vacuole membrane to microtubules, either directly or via kinesin or dynein-like motor proteins. Probably functions in several interorganelle traffic pathways. The chain is Vacuolar segregation protein pep7 (pep7) from Schizosaccharomyces pombe (strain 972 / ATCC 24843) (Fission yeast).